Reading from the N-terminus, the 123-residue chain is Large ribosomal subunit protein bL12 (123 aa).

This sequence belongs to the bacterial ribosomal protein bL12 family. In terms of assembly, homodimer. Part of the ribosomal stalk of the 50S ribosomal subunit. Forms a multimeric L10(L12)X complex, where L10 forms an elongated spine to which 2 to 4 L12 dimers bind in a sequential fashion. Binds GTP-bound translation factors.

Functionally, forms part of the ribosomal stalk which helps the ribosome interact with GTP-bound translation factors. Is thus essential for accurate translation. This chain is Large ribosomal subunit protein bL12, found in Hydrogenovibrio crunogenus (strain DSM 25203 / XCL-2) (Thiomicrospira crunogena).